The following is a 334-amino-acid chain: Fructose-1,6-bisphosphatase class 1 (334 aa).

Glu92, Asp114, Leu116, and Asp117 together coordinate Mg(2+). Substrate-binding positions include 117–120 (DGSS) and Asn209. Glu281 serves as a coordination point for Mg(2+).

It belongs to the FBPase class 1 family. As to quaternary structure, homotetramer. Mg(2+) is required as a cofactor.

It is found in the cytoplasm. It catalyses the reaction beta-D-fructose 1,6-bisphosphate + H2O = beta-D-fructose 6-phosphate + phosphate. Its pathway is carbohydrate biosynthesis; gluconeogenesis. The polypeptide is Fructose-1,6-bisphosphatase class 1 (Nitrosomonas europaea (strain ATCC 19718 / CIP 103999 / KCTC 2705 / NBRC 14298)).